A 306-amino-acid chain; its full sequence is uncharacterized protein (306 aa).

Catalysis depends on Tyr51, which acts as the Proton donor. 197 to 207 (GPVAKGLLTEK) contacts NADP(+).

The protein belongs to the aldo/keto reductase family. Aldo/keto reductase 2 subfamily.

This is an uncharacterized protein from Bacillus subtilis (strain 168).